Here is a 950-residue protein sequence, read N- to C-terminus: Protocadherin alpha-9 (950 aa).

Positions 1-29 (MLYSSRGDPEGQPLLLSLLILAMWVVGSG) are cleaved as a signal peptide. Cadherin domains lie at 30–133 (QLHY…PPVF), 134–242 (PATQ…APVF), 243–350 (DRTL…APQL), 351–455 (TIKT…APAF), 456–565 (AQSE…APAL), and 588–678 (GVVV…APKS). The Extracellular portion of the chain corresponds to 30–697 (QLHYSVPEEA…GPEVTLVDVN (668 aa)). Residues asparagine 254 and asparagine 265 are each glycosylated (N-linked (GlcNAc...) asparagine). The N-linked (GlcNAc...) asparagine glycan is linked to asparagine 548. Residues 698–718 (VYLIIAICAVSSLLVLTLLLY) form a helical membrane-spanning segment. Topologically, residues 719-950 (TVLRCSAMPT…GNSTTDNSDQ (232 aa)) are cytoplasmic. Residues 734-737 (PGKP) form a PXXP 1 repeat. The 5 X 4 AA repeats of P-X-X-P stretch occupies residues 734 to 894 (PGKPTLVCSS…PDKFIIPGSP (161 aa)). Disordered regions lie at residues 770-808 (MAFSPGLSPCAGSTERTGEPSASSDSTGKPRQPNPDWRY), 827-856 (ILRAGPGGPDQQWPTVSSATPEPEAGEVSP), and 871-950 (YGPG…NSDQ). Residues 789–798 (PSASSDSTGK) show a composition bias toward polar residues. PXXP repeat units follow at residues 799–802 (PRQP), 832–835 (PGGP), 873–876 (PGNP), and 891–894 (PGSP). Positions 909 to 923 (DKSDFITFGKKEETK) are enriched in basic and acidic residues.

It localises to the cell membrane. Potential calcium-dependent cell-adhesion protein. May be involved in the establishment and maintenance of specific neuronal connections in the brain. The polypeptide is Protocadherin alpha-9 (PCDHA9) (Homo sapiens (Human)).